The sequence spans 880 residues: Probable potassium channel AKT5 (880 aa).

Over Met-1–Asp-82 the chain is Cytoplasmic. Residues Trp-83–Leu-103 traverse the membrane as a helical segment. At Gln-104 to Ser-111 the chain is on the extracellular side. The chain crosses the membrane as a helical span at residues Ile-112–Ala-132. Residues Phe-133–Thr-153 are Cytoplasmic-facing. Residues Ser-154 to Leu-174 form a helical membrane-spanning segment. Residues His-175–Gly-182 are Extracellular-facing. The helical; Voltage-sensor transmembrane segment at Ile-183–Glu-203 threads the bilayer. Residues Lys-204–Lys-217 are Cytoplasmic-facing. A helical transmembrane segment spans residues Leu-218–Ala-238. The Extracellular segment spans residues His-239 to Val-265. The pore-forming intramembrane region spans Thr-266 to Gly-285. Residues Asn-286 to Arg-291 are Extracellular-facing. The chain crosses the membrane as a helical span at residues Ala-292 to Met-312. Topologically, residues Thr-313–Ser-880 are cytoplasmic. Residue Leu-396–Lys-517 participates in a nucleoside 3',5'-cyclic phosphate binding. ANK repeat units lie at residues Asp-541–Glu-570, Asn-574–Ile-603, Glu-607–Phe-636, Asp-637–Leu-667, and Asn-671–Lys-700. Residues Val-809–Ser-880 form the KHA domain.

Belongs to the potassium channel family. Plant (TC 1.A.1.4) subfamily. In terms of assembly, the potassium channel is probably composed of a homo- or heterotetrameric complex of pore-forming subunits. Predominantly expressed in flowers.

It localises to the membrane. Functionally, probable potassium channel. May interact with the cytoskeleton or with regulatory proteins. The protein is Probable potassium channel AKT5 (AKT5) of Arabidopsis thaliana (Mouse-ear cress).